Consider the following 102-residue polypeptide: Small ribosomal subunit protein uS10 (102 aa).

It belongs to the universal ribosomal protein uS10 family. As to quaternary structure, part of the 30S ribosomal subunit.

In terms of biological role, involved in the binding of tRNA to the ribosomes. The chain is Small ribosomal subunit protein uS10 from Tropheryma whipplei (strain TW08/27) (Whipple's bacillus).